A 194-amino-acid chain; its full sequence is Protein GrpE (194 aa).

A compositionally biased stretch (basic and acidic residues) spans 1–14 (MSKMNPNEKKENAS). The segment at 1-48 (MSKMNPNEKKENASKNENVNNEEATNLQEEQSNAADEAAGSDNVSGEV) is disordered. Polar residues predominate over residues 24-34 (ATNLQEEQSNA).

This sequence belongs to the GrpE family. As to quaternary structure, homodimer.

The protein resides in the cytoplasm. Functionally, participates actively in the response to hyperosmotic and heat shock by preventing the aggregation of stress-denatured proteins, in association with DnaK and GrpE. It is the nucleotide exchange factor for DnaK and may function as a thermosensor. Unfolded proteins bind initially to DnaJ; upon interaction with the DnaJ-bound protein, DnaK hydrolyzes its bound ATP, resulting in the formation of a stable complex. GrpE releases ADP from DnaK; ATP binding to DnaK triggers the release of the substrate protein, thus completing the reaction cycle. Several rounds of ATP-dependent interactions between DnaJ, DnaK and GrpE are required for fully efficient folding. The chain is Protein GrpE from Parabacteroides distasonis (strain ATCC 8503 / DSM 20701 / CIP 104284 / JCM 5825 / NCTC 11152).